We begin with the raw amino-acid sequence, 233 residues long: Uracil-DNA glycosylase (233 aa).

The active-site Proton acceptor is the Asp-70.

Belongs to the uracil-DNA glycosylase (UDG) superfamily. UNG family.

It is found in the cytoplasm. The enzyme catalyses Hydrolyzes single-stranded DNA or mismatched double-stranded DNA and polynucleotides, releasing free uracil.. Functionally, excises uracil residues from the DNA which can arise as a result of misincorporation of dUMP residues by DNA polymerase or due to deamination of cytosine. In Helicobacter pylori (strain Shi470), this protein is Uracil-DNA glycosylase.